A 510-amino-acid polypeptide reads, in one-letter code: ATP synthase subunit alpha (510 aa).

169–176 (GDRQTGKT) serves as a coordination point for ATP.

The protein belongs to the ATPase alpha/beta chains family. F-type ATPases have 2 components, CF(1) - the catalytic core - and CF(0) - the membrane proton channel. CF(1) has five subunits: alpha(3), beta(3), gamma(1), delta(1), epsilon(1). CF(0) has four main subunits: a(1), b(1), b'(1) and c(9-12).

The protein localises to the cell inner membrane. It carries out the reaction ATP + H2O + 4 H(+)(in) = ADP + phosphate + 5 H(+)(out). Produces ATP from ADP in the presence of a proton gradient across the membrane. The alpha chain is a regulatory subunit. This Rhodopseudomonas palustris (strain HaA2) protein is ATP synthase subunit alpha.